The primary structure comprises 287 residues: Inorganic pyrophosphatase (287 aa).

R79 is a binding site for diphosphate. Residues D116, D121, and D153 each coordinate Mg(2+).

It belongs to the PPase family. Requires Mg(2+) as cofactor.

Its subcellular location is the cytoplasm. It catalyses the reaction diphosphate + H2O = 2 phosphate + H(+). The chain is Inorganic pyrophosphatase (IPP1) from Zygosaccharomyces bailii.